The primary structure comprises 124 residues: Small ribosomal subunit protein uS12 (124 aa).

The residue at position 89 (Asp-89) is a 3-methylthioaspartic acid. Lys-108 carries the N6-acetyllysine modification.

Belongs to the universal ribosomal protein uS12 family. In terms of assembly, part of the 30S ribosomal subunit. Contacts proteins S8 and S17. May interact with IF1 in the 30S initiation complex.

Functionally, with S4 and S5 plays an important role in translational accuracy. Interacts with and stabilizes bases of the 16S rRNA that are involved in tRNA selection in the A site and with the mRNA backbone. Located at the interface of the 30S and 50S subunits, it traverses the body of the 30S subunit contacting proteins on the other side and probably holding the rRNA structure together. The combined cluster of proteins S8, S12 and S17 appears to hold together the shoulder and platform of the 30S subunit. In Escherichia coli (strain K12 / MC4100 / BW2952), this protein is Small ribosomal subunit protein uS12.